The chain runs to 283 residues: Phosphate import ATP-binding protein PstB (283 aa).

A compositionally biased stretch (polar residues) spans 1-20 (MAQTLAQTKQISQSHTFDVS). The interval 1 to 32 (MAQTLAQTKQISQSHTFDVSQSHHKTPDDTNS) is disordered. In terms of domain architecture, ABC transporter spans 37-278 (YSTQNLDLWY…PSNKKTEDYI (242 aa)). 69–76 (GPSGCGKS) provides a ligand contact to ATP.

It belongs to the ABC transporter superfamily. Phosphate importer (TC 3.A.1.7) family. As to quaternary structure, the complex is composed of two ATP-binding proteins (PstB), two transmembrane proteins (PstC and PstA) and a solute-binding protein (PstS).

The protein resides in the cell membrane. The enzyme catalyses phosphate(out) + ATP + H2O = ADP + 2 phosphate(in) + H(+). Part of the ABC transporter complex PstSACB involved in phosphate import. Responsible for energy coupling to the transport system. The polypeptide is Phosphate import ATP-binding protein PstB (Staphylococcus aureus (strain USA300)).